Consider the following 365-residue polypeptide: 4-hydroxy-tetrahydrodipicolinate synthase 1, chloroplastic (365 aa).

The N-terminal 39 residues, 1-39, are a transit peptide targeting the chloroplast; it reads MSALKNYGLISIDSALHFPRSNQLQSYKRRNAKWVSPIA. Threonine 108 contributes to the pyruvate binding site. Tyrosine 194 (proton donor/acceptor) is an active-site residue. The active-site Schiff-base intermediate with substrate is the lysine 222. Position 261 (isoleucine 261) interacts with pyruvate.

This sequence belongs to the DapA family.

It is found in the plastid. It localises to the chloroplast. The catalysed reaction is L-aspartate 4-semialdehyde + pyruvate = (2S,4S)-4-hydroxy-2,3,4,5-tetrahydrodipicolinate + H2O + H(+). It functions in the pathway amino-acid biosynthesis; L-lysine biosynthesis via DAP pathway; (S)-tetrahydrodipicolinate from L-aspartate: step 3/4. Its function is as follows. Catalyzes the condensation of (S)-aspartate-beta-semialdehyde [(S)-ASA] and pyruvate to 4-hydroxy-tetrahydrodipicolinate (HTPA). The polypeptide is 4-hydroxy-tetrahydrodipicolinate synthase 1, chloroplastic (DHDPS1) (Arabidopsis thaliana (Mouse-ear cress)).